An 86-amino-acid polypeptide reads, in one-letter code: ATP synthase subunit c (86 aa).

Transmembrane regions (helical) follow at residues 8-28 (VLAA…GAGI) and 66-86 (GIYA…IGML).

This sequence belongs to the ATPase C chain family. F-type ATPases have 2 components, F(1) - the catalytic core - and F(0) - the membrane proton channel. F(1) has five subunits: alpha(3), beta(3), gamma(1), delta(1), epsilon(1). F(0) has three main subunits: a(1), b(2) and c(10-14). The alpha and beta chains form an alternating ring which encloses part of the gamma chain. F(1) is attached to F(0) by a central stalk formed by the gamma and epsilon chains, while a peripheral stalk is formed by the delta and b chains.

It localises to the cell membrane. Its function is as follows. F(1)F(0) ATP synthase produces ATP from ADP in the presence of a proton or sodium gradient. F-type ATPases consist of two structural domains, F(1) containing the extramembraneous catalytic core and F(0) containing the membrane proton channel, linked together by a central stalk and a peripheral stalk. During catalysis, ATP synthesis in the catalytic domain of F(1) is coupled via a rotary mechanism of the central stalk subunits to proton translocation. Key component of the F(0) channel; it plays a direct role in translocation across the membrane. A homomeric c-ring of between 10-14 subunits forms the central stalk rotor element with the F(1) delta and epsilon subunits. The chain is ATP synthase subunit c from Natranaerobius thermophilus (strain ATCC BAA-1301 / DSM 18059 / JW/NM-WN-LF).